Reading from the N-terminus, the 495-residue chain is UDP-glycosyltransferase 1 (495 aa).

His-24 functions as the Proton acceptor in the catalytic mechanism. His-24 provides a ligand contact to an anthocyanidin. Asp-129 acts as the Charge relay in catalysis. The UDP-alpha-D-glucose site is built by Gln-358, His-373, Trp-376, Asn-377, Ser-378, and Glu-381. An anthocyanidin is bound at residue Gly-396. UDP-alpha-D-glucose-binding residues include Asp-397 and Gln-398.

Belongs to the UDP-glycosyltransferase family.

It catalyses the reaction oleanolate + UDP-alpha-D-glucose = oleanolate 3-O-beta-D-glucoside + UDP + H(+). Functionally, catalyzes the transfer of a glucose (Glc) moiety from UDP-Glc to the C-3 position of the oleanane sapogenins oleanolate and hederagenin. The monoglucosylated hederagenin 3-O-beta-D-glucoside is a feeding deterrent of the yellow-striped flea beetle (Phyllotreta nemorum). The polypeptide is UDP-glycosyltransferase 1 (Barbarea vulgaris (Yellow rocket)).